Reading from the N-terminus, the 337-residue chain is Glyceraldehyde-3-phosphate dehydrogenase (337 aa).

NAD(+) contacts are provided by residues 12 to 13, aspartate 34, and arginine 79; that span reads RI. D-glyceraldehyde 3-phosphate-binding positions include 150 to 152, threonine 181, 210 to 211, and arginine 233; these read SCT and TG. Cysteine 151 functions as the Nucleophile in the catalytic mechanism. Asparagine 315 serves as a coordination point for NAD(+).

This sequence belongs to the glyceraldehyde-3-phosphate dehydrogenase family. In terms of assembly, homotetramer.

Its subcellular location is the cytoplasm. It carries out the reaction D-glyceraldehyde 3-phosphate + phosphate + NAD(+) = (2R)-3-phospho-glyceroyl phosphate + NADH + H(+). The protein operates within carbohydrate degradation; glycolysis; pyruvate from D-glyceraldehyde 3-phosphate: step 1/5. This chain is Glyceraldehyde-3-phosphate dehydrogenase (GPD), found in Omphalotus olearius (Jack o'lantern).